We begin with the raw amino-acid sequence, 910 residues long: Leucine--tRNA ligase (910 aa).

Residues 42-52 (PYPSGKLHMGH) carry the 'HIGH' region motif. The 'KMSKS' region signature appears at 668–672 (KMSKS). Lysine 671 serves as a coordination point for ATP.

It belongs to the class-I aminoacyl-tRNA synthetase family.

The protein localises to the cytoplasm. It carries out the reaction tRNA(Leu) + L-leucine + ATP = L-leucyl-tRNA(Leu) + AMP + diphosphate. The chain is Leucine--tRNA ligase from Neisseria meningitidis serogroup A / serotype 4A (strain DSM 15465 / Z2491).